A 65-amino-acid polypeptide reads, in one-letter code: Protein C' (65 aa).

Belongs to the rhabdoviruses C protein family.

In terms of biological role, seems to stimulates transcription by the viral polymerase. May play a role in viral pathogenesis or transmission by insects vectors. In Aedes (Bovine), this protein is Protein C' (P).